The following is a 308-amino-acid chain: Glutathione synthetase (308 aa).

One can recognise an ATP-grasp domain in the interval 117-300 (KLLPLSFPKF…LERDCWDYFE (184 aa)). An ATP-binding site is contributed by 143–198 (YAEYGDIVLKPLYDYGGNGVCRICGRADVGAISSAMVERYEAPLVAQQFIDDISSD). Mg(2+)-binding residues include Glu-271 and Asn-273.

It belongs to the prokaryotic GSH synthase family. Mg(2+) serves as cofactor. The cofactor is Mn(2+).

It carries out the reaction gamma-L-glutamyl-L-cysteine + glycine + ATP = glutathione + ADP + phosphate + H(+). Its pathway is sulfur metabolism; glutathione biosynthesis; glutathione from L-cysteine and L-glutamate: step 2/2. This chain is Glutathione synthetase, found in Anaplasma centrale.